The sequence spans 324 residues: Putative HTH-type transcriptional regulatory protein UNCMA_15260 (324 aa).

Positions 132 to 189 constitute an HTH cro/C1-type domain; the sequence is LRSLREAKNISLGELAMALGVSRRTISKYESGMNATIEAALKLEEILDAPIACPVNMI. The H-T-H motif DNA-binding region spans 143-162; the sequence is LGELAMALGVSRRTISKYES.

This chain is Putative HTH-type transcriptional regulatory protein UNCMA_15260, found in Methanocella arvoryzae (strain DSM 22066 / NBRC 105507 / MRE50).